The following is a 316-amino-acid chain: MKRKLFTICLASLQFACAAENLNNKSYEWDIYPVPANAGDGMVWKLHPQSDDFNYIADEKDKGKEFYAKWTDFYHNHWTGPAPTIWQRDHVSVSDGFLKIRASRPEDVPLKKVVSGPNTKELPGTYTGCITSKTRVKYPVYVEAYAKLSNSTMASDVWMLSPDDTQEIDIIEAYGGDRDGGGYGADRLHLSHHIFIRQPFKDYQPKDSGSWYKDDKGTLWRDDFHRVGVFWKDPFTLEYYVDGELVRTISGKDIIDPNNYTGGTGLVKDMDIIINMEDQSWRAVKGLSPTDEELKNVEDHTFLVDWIRVYTLVPEE.

Residues 1–18 form the signal peptide; the sequence is MKRKLFTICLASLQFACA. A GH16 domain is found at 27–315; that stretch reads YEWDIYPVPA…WIRVYTLVPE (289 aa). Substrate-binding positions include tryptophan 78, 87-97, and 101-103; these read QRDHVSVSDGF and RAS. Glutamate 167 acts as the Nucleophile in catalysis. The active-site Proton donor is glutamate 172. Arginine 197 lines the substrate pocket.

Belongs to the glycosyl hydrolase 16 family.

It catalyses the reaction Hydrolysis of (1-&gt;4)-beta-D-galactosidic linkages in agarose, giving the tetramer as the predominant product.. Functionally, cleaves the beta-1,4-linkages between beta-D-galactose and alpha-L-3,6-anhydro-galactose residues in agarose. Cleaves agarose in a random manner with retention of the anomeric-bond configuration, producing beta-anomers that give rise progressively to alpha-anomers when mutarotation takes place. The sequence is that of Beta-agarase from Phocaeicola plebeius (strain DSM 17135 / JCM 12973 / CCUG 54634 / M2) (Bacteroides plebeius).